Reading from the N-terminus, the 724-residue chain is ATPase family protein 2 homolog (724 aa).

Residues 281-287 and 503-508 contribute to the ATP site; these read PGSGKTL and GCSKTL.

It belongs to the AAA ATPase family. AFG2 subfamily. As to quaternary structure, homohexamer; ATP binding induces oligomerization. Forms a ring-shaped particle of about 12 nm diameter, that displays 6-fold radial symmetry. Interacts (via N-terminus) with kinase air-2; the interaction is direct and inhibits air-2 kinase activity in an ATPase-dependent manner.

Its subcellular location is the cytoplasm. It carries out the reaction ATP + H2O = ADP + phosphate + H(+). In terms of biological role, ATP-dependent chaperone which uses the energy provided by ATP hydrolysis to generate mechanical force to disassemble protein complexes. Required for various steps of embryonic mitosis including centrosome duplication, spindle assembly, ER dynamics and cell cycle progression. Regulates the stability and activity of kinase air-2, a component of the chromosomal passenger complex (CPC). Inhibits air-2 kinase activity from metaphase to late telophase and negatively regulates air-2 stability during mitotic exit. Controls ER transition into sheet-like structures at the onset of mitosis, possibly by regulating homotypic membrane fusion. The chain is ATPase family protein 2 homolog from Caenorhabditis elegans.